We begin with the raw amino-acid sequence, 400 residues long: Large envelope protein (400 aa).

An N-acetylmethionine modification is found at methionine 1. 2 disordered regions span residues 1-24 and 89-116; these read MGGW…PLGF and PAMP…RDSH. Residue glycine 2 is the site of N-myristoyl glycine; by host attachment. Positions 2–119 are pre-S1; that stretch reads GGWSSKPRKG…PPLRDSHPQA (118 aa). Positions 2–174 are pre-S; the sequence is GGWSSKPRKG…SSRIGDPAPN (173 aa). The Virion surface; in external conformation segment spans residues 2-181; that stretch reads GGWSSKPRKG…APNMENITSG (180 aa). The Intravirion; in internal conformation portion of the chain corresponds to 2–253; it reads GGWSSKPRKG…PGYRWMCLRR (252 aa). The N-linked (GlcNAc...) asparagine glycan is linked to tryptophan 4. The span at 96–106 shows a compositional bias: polar residues; the sequence is STNRQSGRQPT. Residues 120-174 form a pre-S2 region; sequence MQWNSTAFHQALQDPRVRGLYFPAGGSSSGTLNPVPTIASHISSISSRIGDPAPN. A helical membrane pass occupies residues 182–202; sequence FLGPLLVLQAGFFLLTRILTI. Residues 203-253 lie on the Intravirion; in external conformation side of the membrane; sequence PQSLDSWWTSLNFLGGAPVCLGQNSQSPTSNHSPTSCPPICPGYRWMCLRR. A helical membrane pass occupies residues 254-274; sequence FIIFLFILLLCLIFLLVLLDY. At 275–348 the chain is on the virion surface side; it reads QGMLPVCPLI…WASVRFSWLS (74 aa). Residue asparagine 320 is glycosylated (N-linked (GlcNAc...) asparagine; by host). Residues 349–369 traverse the membrane as a helical segment; the sequence is LLVPFVQWFVGLSPTVWLSAI. Residues 370-375 are Intravirion-facing; the sequence is WMMWYW. A helical membrane pass occupies residues 376-398; the sequence is GPSLYNILSPFIPLLPIFFCLWV. The Virion surface portion of the chain corresponds to 399-400; that stretch reads YI.

This sequence belongs to the orthohepadnavirus major surface antigen family. In terms of assembly, in its internal form (Li-HBsAg), interacts with the capsid protein and with the isoform S. Interacts with host chaperone CANX. Associates with host chaperone CANX through its pre-S2 N glycan; this association may be essential for isoform M proper secretion. As to quaternary structure, interacts with isoform L. Interacts with the antigens of satellite virus HDV (HDVAgs); this interaction is required for encapsidation of HDV genomic RNA. In terms of processing, isoform M is N-terminally acetylated by host at a ratio of 90%, and N-glycosylated by host at the pre-S2 region. Myristoylated.

It localises to the virion membrane. Its function is as follows. The large envelope protein exists in two topological conformations, one which is termed 'external' or Le-HBsAg and the other 'internal' or Li-HBsAg. In its external conformation the protein attaches the virus to cell receptors and thereby initiating infection. This interaction determines the species specificity and liver tropism. This attachment induces virion internalization predominantly through caveolin-mediated endocytosis. The large envelope protein also assures fusion between virion membrane and endosomal membrane. In its internal conformation the protein plays a role in virion morphogenesis and mediates the contact with the nucleocapsid like a matrix protein. In terms of biological role, the middle envelope protein plays an important role in the budding of the virion. It is involved in the induction of budding in a nucleocapsid independent way. In this process the majority of envelope proteins bud to form subviral lipoprotein particles of 22 nm of diameter that do not contain a nucleocapsid. The polypeptide is Large envelope protein (Hepatitis B virus genotype A1 subtype adw (isolate Philippines/pFDW294/1988) (HBV-A)).